Reading from the N-terminus, the 547-residue chain is Phenylalanine--tRNA ligase beta subunit (547 aa).

Residues 269 to 344 (LDVRFMEVDV…IGYGYENITP (76 aa)) enclose the B5 domain. Aspartate 322, aspartate 328, glutamate 331, and aspartate 332 together coordinate Mg(2+).

Belongs to the phenylalanyl-tRNA synthetase beta subunit family. Type 2 subfamily. As to quaternary structure, tetramer of two alpha and two beta subunits. Mg(2+) serves as cofactor.

The protein resides in the cytoplasm. The catalysed reaction is tRNA(Phe) + L-phenylalanine + ATP = L-phenylalanyl-tRNA(Phe) + AMP + diphosphate + H(+). In Archaeoglobus fulgidus (strain ATCC 49558 / DSM 4304 / JCM 9628 / NBRC 100126 / VC-16), this protein is Phenylalanine--tRNA ligase beta subunit.